The chain runs to 370 residues: Glutamine synthetase (370 aa).

A2 is subject to N-acetylalanine. Position 5 is a phosphoserine (S5). The 80-residue stretch at 24–103 (IIAEYVWIDG…VLAACYNNDG (80 aa)) folds into the GS beta-grasp domain. Positions 110–370 (HRHEAAKLFA…MTKEFERESS (261 aa)) constitute a GS catalytic domain. Residues K283, K324, and K363 each participate in a glycyl lysine isopeptide (Lys-Gly) (interchain with G-Cter in ubiquitin) cross-link.

This sequence belongs to the glutamine synthetase family. As to quaternary structure, homooctamer.

The protein localises to the cytoplasm. The enzyme catalyses L-glutamate + NH4(+) + ATP = L-glutamine + ADP + phosphate + H(+). This is Glutamine synthetase (GLN1) from Saccharomyces cerevisiae (strain ATCC 204508 / S288c) (Baker's yeast).